Consider the following 651-residue polypeptide: MCAASVYPVSPEAAKHSLTDEAAYRAMYQQSVINPEGFWREQAARLDWIRPFSEVKRTSFDDHHVDIKWFADGTLNVSANCLDRHLAERGDQVAIIWEGDDPSEHREITYRELYQEVCKFANALRGQDVHRGDVVTIYMPMIPEAAVAMLACARIGAIHSVVFGGFSPEALAGRIIDGSSKVVITADQGIRGGKTIALKENVDEALTNPQTRCVQKIIVVRRTGANIRWYPHRDVSYDDLMRVAGEVCAPKEMGAEEPLFILYTSGSTGKPKGVLHTCGGYLLYAALTHERVFDYRPGDIYWCTADIGWITGHSYLIYGPLANGATTLMYEGVPNYPDVTRIARIIDKHRVNILYTAPTAIRAMMAEGPAAMEGADGSSLRLLGTVGEPINPEAWHWYYETVGRSRCPIVDTWWQTETGGILISPLPGATALKPGSATRPLFGVVPGLVDNLGNLLEGPAEGNLVILDSWPGQMRTIYGDHDRFVDTYFKTFRGMYFTGDGARRDEDGYYWITGRVDDVLNVSGHRMGTAEIESALVAHAKVAEAAAVGVPHPLKGQAIYVYVTLVAGTEPSDTLRQELQQWVRHEIGPIAVPDTIQWAPGLPKTRSGKIMRRLLRKIATDDYDTLGDTSTLADPGVVDQLIAAHEAVKQR.

Residues 191–194 (RGGK), Thr311, and Asn335 each bind CoA. ATP is bound by residues 387–389 (GEP), 411–416 (DTWWQT), Asp500, and Arg515. Ser523 is a binding site for CoA. Arg526 contacts ATP. Mg(2+) contacts are provided by Val537, His539, and Val542. Residue Arg584 coordinates CoA. Residue Lys609 is modified to N6-acetyllysine.

Belongs to the ATP-dependent AMP-binding enzyme family. The cofactor is Mg(2+). In terms of processing, acetylated. Deacetylation by the SIR2-homolog deacetylase activates the enzyme.

It catalyses the reaction acetate + ATP + CoA = acetyl-CoA + AMP + diphosphate. Its function is as follows. Catalyzes the conversion of acetate into acetyl-CoA (AcCoA), an essential intermediate at the junction of anabolic and catabolic pathways. AcsA undergoes a two-step reaction. In the first half reaction, AcsA combines acetate with ATP to form acetyl-adenylate (AcAMP) intermediate. In the second half reaction, it can then transfer the acetyl group from AcAMP to the sulfhydryl group of CoA, forming the product AcCoA. The chain is Acetyl-coenzyme A synthetase from Stutzerimonas stutzeri (strain A1501) (Pseudomonas stutzeri).